The primary structure comprises 123 residues: Small ribosomal subunit protein uS12 (123 aa).

Asp-89 is subject to 3-methylthioaspartic acid. The disordered stretch occupies residues 104 to 123 (TAGVKDRKQARSKYGAKRPK). The span at 113 to 123 (ARSKYGAKRPK) shows a compositional bias: basic residues.

Belongs to the universal ribosomal protein uS12 family. In terms of assembly, part of the 30S ribosomal subunit. Contacts proteins S8 and S17. May interact with IF1 in the 30S initiation complex.

Its function is as follows. With S4 and S5 plays an important role in translational accuracy. Interacts with and stabilizes bases of the 16S rRNA that are involved in tRNA selection in the A site and with the mRNA backbone. Located at the interface of the 30S and 50S subunits, it traverses the body of the 30S subunit contacting proteins on the other side and probably holding the rRNA structure together. The combined cluster of proteins S8, S12 and S17 appears to hold together the shoulder and platform of the 30S subunit. The chain is Small ribosomal subunit protein uS12 from Neisseria meningitidis serogroup C (strain 053442).